We begin with the raw amino-acid sequence, 297 residues long: Acetyl-coenzyme A carboxylase carboxyl transferase subunit beta (297 aa).

Positions 25 to 294 constitute a CoA carboxyltransferase N-terminal domain; that stretch reads LWVKCPETGQ…LPPKGRLPRP (270 aa).

This sequence belongs to the AccD/PCCB family. In terms of assembly, acetyl-CoA carboxylase is a heterohexamer composed of biotin carboxyl carrier protein (AccB), biotin carboxylase (AccC) and two subunits each of ACCase subunit alpha (AccA) and ACCase subunit beta (AccD).

The protein localises to the cytoplasm. It catalyses the reaction N(6)-carboxybiotinyl-L-lysyl-[protein] + acetyl-CoA = N(6)-biotinyl-L-lysyl-[protein] + malonyl-CoA. It functions in the pathway lipid metabolism; malonyl-CoA biosynthesis; malonyl-CoA from acetyl-CoA: step 1/1. Component of the acetyl coenzyme A carboxylase (ACC) complex. Biotin carboxylase (BC) catalyzes the carboxylation of biotin on its carrier protein (BCCP) and then the CO(2) group is transferred by the transcarboxylase to acetyl-CoA to form malonyl-CoA. This Xanthobacter autotrophicus (strain ATCC BAA-1158 / Py2) protein is Acetyl-coenzyme A carboxylase carboxyl transferase subunit beta.